Here is a 716-residue protein sequence, read N- to C-terminus: MEDCLHTSSENLSKLVSWAHSHGTICSLIPNLKHLLSEGSHGNLTAMWGCSAGHAYHWPLTATCRAGSQERVCFQDNRSFNSDSPSIIGVPSETQTSPVERYPGRPVKAKLDCNRTRDSCDFSYCSEPSELDEAVEEYEDENTLFDMVCESSVTDEDSDFEPQTQRPQSIARKRPGIVPSSIHSSSQGQMVDECSNDVIIKKIKQEIPEDYYIVANAELTGGVDGPALSLTQMAKPKPQTHAGPSCVGSAKLIPHVTSAINTELDPHILSASPSVISRPIIPKTARVSLASPNRGPPGAHGTAHQVTMQMPVSTSHPNKQISIPLSALQLPGQDEQVASEEFLPHLPSQVSSCEVALSPSVNTEPEVSSSQQQPPAAPTITTEATAQCIPAYSTKLNKFPVFNINDDLNGLCTSAVSPNTTKATRYALNVWRYWCMTNGLKDHTDITKIPAVKLNELLENFYVTVKKSDGSDFLATSLHAIRRGLDRILKNAGVGFSITSSTFSSSTKKLKEKLWVLSKAGMSGARSRNIVYFSLSDEEEMWQAGCLGDDSPITLLSTVVKYNSQYLNMRTLQEHADLMYGDIELLKDPQNQPYFARTDSVKRESRSGSTRVCHGKIYHEHSRGHKQCPYCLLYKYMYIHRPPTQMEAKSPFYLTARKEATDMGSVWYEEQRMGLRSLRGIVPNLARKVKLENCENFTFVSFTQVSRRLGSHSCCQ.

Disordered regions lie at residues 84–103 and 153–189; these read SPSI…ERYP and VTDE…SQGQ. Phosphoserine is present on serine 97. Residues lysine 201, lysine 204, lysine 237, lysine 283, and lysine 626 each participate in a glycyl lysine isopeptide (Lys-Gly) (interchain with G-Cter in SUMO2) cross-link.

This is an uncharacterized protein from Mus musculus (Mouse).